We begin with the raw amino-acid sequence, 334 residues long: Ferrochelatase (334 aa).

Positions 207 and 288 each coordinate Fe cation.

This sequence belongs to the ferrochelatase family.

The protein localises to the cytoplasm. The catalysed reaction is heme b + 2 H(+) = protoporphyrin IX + Fe(2+). Its pathway is porphyrin-containing compound metabolism; protoheme biosynthesis; protoheme from protoporphyrin-IX: step 1/1. Its function is as follows. Catalyzes the ferrous insertion into protoporphyrin IX. In Helicobacter pylori (strain ATCC 700392 / 26695) (Campylobacter pylori), this protein is Ferrochelatase.